The primary structure comprises 178 residues: ATP synthase subunit delta (178 aa).

Belongs to the ATPase delta chain family. As to quaternary structure, F-type ATPases have 2 components, F(1) - the catalytic core - and F(0) - the membrane proton channel. F(1) has five subunits: alpha(3), beta(3), gamma(1), delta(1), epsilon(1). F(0) has three main subunits: a(1), b(2) and c(10-14). The alpha and beta chains form an alternating ring which encloses part of the gamma chain. F(1) is attached to F(0) by a central stalk formed by the gamma and epsilon chains, while a peripheral stalk is formed by the delta and b chains.

It localises to the cell inner membrane. Functionally, f(1)F(0) ATP synthase produces ATP from ADP in the presence of a proton or sodium gradient. F-type ATPases consist of two structural domains, F(1) containing the extramembraneous catalytic core and F(0) containing the membrane proton channel, linked together by a central stalk and a peripheral stalk. During catalysis, ATP synthesis in the catalytic domain of F(1) is coupled via a rotary mechanism of the central stalk subunits to proton translocation. Its function is as follows. This protein is part of the stalk that links CF(0) to CF(1). It either transmits conformational changes from CF(0) to CF(1) or is implicated in proton conduction. This Aromatoleum aromaticum (strain DSM 19018 / LMG 30748 / EbN1) (Azoarcus sp. (strain EbN1)) protein is ATP synthase subunit delta.